We begin with the raw amino-acid sequence, 386 residues long: CRISPR system endoribonuclease Csm6' (386 aa).

The interval 1 to 146 (MRVLISAVGD…ASNENIGHDN (146 aa)) is CARF domain. An HEPN domain region spans residues 147–386 (DENIDELIEV…LNKILLTKLN (240 aa)).

This sequence belongs to the CRISPR-associated Csm6 family. As to quaternary structure, homodimer. The composite ssRNase active site is formed at the dimer interface.

With respect to regulation, non-specific ssRNase activity is stimulated about 1000-fold by cyclic oligoadenylate (cOA), a second messenger produced by Cas10 of the ternary Csm effector complex in the presence of a cognate target RNA. Functionally, CRISPR (clustered regularly interspaced short palindromic repeat) is an adaptive immune system that provides protection against mobile genetic elements (viruses, transposable elements and conjugative plasmids). CRISPR clusters contain spacers, sequences complementary to antecedent mobile elements, and target invading nucleic acids. CRISPR clusters are transcribed and processed into CRISPR RNA (crRNA). The type III-A Csm complex binds crRNA and acts as a crRNA-guided RNase, DNase and cyclic oligoadenylate synthase; binding of target RNA cognate to the crRNA is required for all activities. In a heterologous host this Csm effector complex restricts ssRNA phage MS2, suggesting it may target RNA viruses in vivo. This protein is not part of the Csm complex. In terms of biological role, csm functions as a non-specific ssDNase. Base-pairing between crRNA and target RNA to form a ternary Csm complex activates a ssDNase activity; target RNA cleavage suppresses the ssDNase, a temporal control that prevents uncontrolled DNA degradation. Viral RNA transcripts probably tether the Csm complex to the viral genome, recruiting Cas10 ssDNA activity which is able to degrade DNA in the transcription bubble, spatially controlling the DNase activity. A single-strand-specific endoribonuclease (ssRNase) that is approximately 1000-fold stimulated by cyclic oligoadenylate (cOA); although several species of cOA are synthesized by this organism only cyclic hexaadenylate (cA6) stimulates the ssRNase activity. Cleaves preferentially within GA or AA dinucleotides, although the presence of cA6 broadens the preference. This is CRISPR system endoribonuclease Csm6' from Streptococcus thermophilus.